Consider the following 279-residue polypeptide: Ribosomal RNA small subunit methyltransferase A (279 aa).

The S-adenosyl-L-methionine site is built by His-11, Leu-13, Gly-42, Glu-63, Asp-88, and Asn-104.

The protein belongs to the class I-like SAM-binding methyltransferase superfamily. rRNA adenine N(6)-methyltransferase family. RsmA subfamily.

It localises to the cytoplasm. It catalyses the reaction adenosine(1518)/adenosine(1519) in 16S rRNA + 4 S-adenosyl-L-methionine = N(6)-dimethyladenosine(1518)/N(6)-dimethyladenosine(1519) in 16S rRNA + 4 S-adenosyl-L-homocysteine + 4 H(+). Its function is as follows. Specifically dimethylates two adjacent adenosines (A1518 and A1519) in the loop of a conserved hairpin near the 3'-end of 16S rRNA in the 30S particle. May play a critical role in biogenesis of 30S subunits. This chain is Ribosomal RNA small subunit methyltransferase A, found in Synechococcus sp. (strain JA-3-3Ab) (Cyanobacteria bacterium Yellowstone A-Prime).